A 158-amino-acid polypeptide reads, in one-letter code: Flagellar assembly factor FliW (158 aa).

The protein belongs to the FliW family. In terms of assembly, interacts with translational regulator CsrA and flagellin(s).

The protein localises to the cytoplasm. Functionally, acts as an anti-CsrA protein, binds CsrA and prevents it from repressing translation of its target genes, one of which is flagellin. Binds to flagellin and participates in the assembly of the flagellum. The polypeptide is Flagellar assembly factor FliW (Moorella thermoacetica (strain ATCC 39073 / JCM 9320)).